The primary structure comprises 558 residues: Urocanate hydratase (558 aa).

NAD(+) is bound by residues 54 to 55 (GG), Q132, 178 to 180 (GMG), E198, 244 to 245 (NA), 265 to 269 (QTSAH), 275 to 276 (YL), and Y324. C412 is an active-site residue. G494 is a binding site for NAD(+).

Belongs to the urocanase family. NAD(+) is required as a cofactor.

It is found in the cytoplasm. The enzyme catalyses 4-imidazolone-5-propanoate = trans-urocanate + H2O. The protein operates within amino-acid degradation; L-histidine degradation into L-glutamate; N-formimidoyl-L-glutamate from L-histidine: step 2/3. Its function is as follows. Catalyzes the conversion of urocanate to 4-imidazolone-5-propionate. The sequence is that of Urocanate hydratase from Acinetobacter baumannii (strain SDF).